Here is a 338-residue protein sequence, read N- to C-terminus: Mycothiol acetyltransferase (338 aa).

N-acetyltransferase domains lie at 29–173 (PETY…HQLP) and 181–338 (ISLR…NKFQ). 1D-myo-inositol 2-(L-cysteinylamino)-2-deoxy-alpha-D-glucopyranoside is bound at residue Asp-55. Acetyl-CoA is bound at residue 105-107 (LVV). 1D-myo-inositol 2-(L-cysteinylamino)-2-deoxy-alpha-D-glucopyranoside contacts are provided by Glu-208, Lys-248, and Glu-261. Acetyl-CoA-binding positions include 265–267 (VGI) and 272–278 (QGKGLGK). Residue Tyr-299 participates in 1D-myo-inositol 2-(L-cysteinylamino)-2-deoxy-alpha-D-glucopyranoside binding.

Belongs to the acetyltransferase family. MshD subfamily. In terms of assembly, monomer.

The catalysed reaction is 1D-myo-inositol 2-(L-cysteinylamino)-2-deoxy-alpha-D-glucopyranoside + acetyl-CoA = mycothiol + CoA + H(+). Functionally, catalyzes the transfer of acetyl from acetyl-CoA to desacetylmycothiol (Cys-GlcN-Ins) to form mycothiol. This chain is Mycothiol acetyltransferase, found in Renibacterium salmoninarum (strain ATCC 33209 / DSM 20767 / JCM 11484 / NBRC 15589 / NCIMB 2235).